The sequence spans 493 residues: UDP-N-acetylmuramate--L-alanine ligase (493 aa).

An ATP-binding site is contributed by 126 to 132 (GTHGKTT).

The protein belongs to the MurCDEF family.

Its subcellular location is the cytoplasm. The catalysed reaction is UDP-N-acetyl-alpha-D-muramate + L-alanine + ATP = UDP-N-acetyl-alpha-D-muramoyl-L-alanine + ADP + phosphate + H(+). The protein operates within cell wall biogenesis; peptidoglycan biosynthesis. Functionally, cell wall formation. This is UDP-N-acetylmuramate--L-alanine ligase from Hamiltonella defensa subsp. Acyrthosiphon pisum (strain 5AT).